We begin with the raw amino-acid sequence, 201 residues long: Putative 3-methyladenine DNA glycosylase (201 aa).

It belongs to the DNA glycosylase MPG family.

The polypeptide is Putative 3-methyladenine DNA glycosylase (Trichodesmium erythraeum (strain IMS101)).